The sequence spans 151 residues: Putative pre-16S rRNA nuclease (151 aa).

Belongs to the YqgF nuclease family.

The protein resides in the cytoplasm. Functionally, could be a nuclease involved in processing of the 5'-end of pre-16S rRNA. The polypeptide is Putative pre-16S rRNA nuclease (Neisseria meningitidis serogroup B (strain ATCC BAA-335 / MC58)).